The sequence spans 98 residues: NADH-ubiquinone oxidoreductase chain 4L (98 aa).

3 consecutive transmembrane segments (helical) span residues 1–21 (MLPI…GVLI), 29–49 (TLLC…LMIT), and 59–79 (IPLI…ALLV).

This sequence belongs to the complex I subunit 4L family. As to quaternary structure, core subunit of respiratory chain NADH dehydrogenase (Complex I) which is composed of 45 different subunits.

The protein localises to the mitochondrion inner membrane. The enzyme catalyses a ubiquinone + NADH + 5 H(+)(in) = a ubiquinol + NAD(+) + 4 H(+)(out). In terms of biological role, core subunit of the mitochondrial membrane respiratory chain NADH dehydrogenase (Complex I) which catalyzes electron transfer from NADH through the respiratory chain, using ubiquinone as an electron acceptor. Part of the enzyme membrane arm which is embedded in the lipid bilayer and involved in proton translocation. The sequence is that of NADH-ubiquinone oxidoreductase chain 4L (MT-ND4L) from Phascogale tapoatafa (Common wambenger).